Reading from the N-terminus, the 314-residue chain is tRNA-cytidine(32) 2-sulfurtransferase (314 aa).

The PP-loop motif signature appears at 46-51 (SGGKDS). Positions 121, 124, and 212 each coordinate [4Fe-4S] cluster.

It belongs to the TtcA family. As to quaternary structure, homodimer. Mg(2+) serves as cofactor. Requires [4Fe-4S] cluster as cofactor.

It localises to the cytoplasm. It carries out the reaction cytidine(32) in tRNA + S-sulfanyl-L-cysteinyl-[cysteine desulfurase] + AH2 + ATP = 2-thiocytidine(32) in tRNA + L-cysteinyl-[cysteine desulfurase] + A + AMP + diphosphate + H(+). It participates in tRNA modification. Catalyzes the ATP-dependent 2-thiolation of cytidine in position 32 of tRNA, to form 2-thiocytidine (s(2)C32). The sulfur atoms are provided by the cysteine/cysteine desulfurase (IscS) system. The sequence is that of tRNA-cytidine(32) 2-sulfurtransferase from Nitrosomonas europaea (strain ATCC 19718 / CIP 103999 / KCTC 2705 / NBRC 14298).